A 172-amino-acid chain; its full sequence is Large ribosomal subunit protein uL10 (172 aa).

Belongs to the universal ribosomal protein uL10 family. As to quaternary structure, part of the ribosomal stalk of the 50S ribosomal subunit. The N-terminus interacts with L11 and the large rRNA to form the base of the stalk. The C-terminus forms an elongated spine to which L12 dimers bind in a sequential fashion forming a multimeric L10(L12)X complex.

Functionally, forms part of the ribosomal stalk, playing a central role in the interaction of the ribosome with GTP-bound translation factors. This chain is Large ribosomal subunit protein uL10, found in Francisella tularensis subsp. holarctica (strain FTNF002-00 / FTA).